A 155-amino-acid polypeptide reads, in one-letter code: Protein-export protein SecB (155 aa).

Belongs to the SecB family. In terms of assembly, homotetramer, a dimer of dimers. One homotetramer interacts with 1 SecA dimer.

The protein resides in the cytoplasm. In terms of biological role, one of the proteins required for the normal export of preproteins out of the cell cytoplasm. It is a molecular chaperone that binds to a subset of precursor proteins, maintaining them in a translocation-competent state. It also specifically binds to its receptor SecA. The protein is Protein-export protein SecB of Albidiferax ferrireducens (strain ATCC BAA-621 / DSM 15236 / T118) (Rhodoferax ferrireducens).